A 122-amino-acid polypeptide reads, in one-letter code: Acidic phospholipase A2 A' (122 aa).

7 cysteine pairs are disulfide-bonded: Cys-26/Cys-115, Cys-28/Cys-44, Cys-43/Cys-95, Cys-49/Cys-122, Cys-50/Cys-88, Cys-57/Cys-81, and Cys-75/Cys-86. Tyr-27, Gly-29, and Gly-31 together coordinate Ca(2+). Residue His-47 is part of the active site. Asp-48 provides a ligand contact to Ca(2+). The active site involves Asp-89.

The protein belongs to the phospholipase A2 family. Group II subfamily. D49 sub-subfamily. It depends on Ca(2+) as a cofactor. As to expression, expressed by the venom gland.

The protein localises to the secreted. The enzyme catalyses a 1,2-diacyl-sn-glycero-3-phosphocholine + H2O = a 1-acyl-sn-glycero-3-phosphocholine + a fatty acid + H(+). PLA2 catalyzes the calcium-dependent hydrolysis of the 2-acyl groups in 3-sn-phosphoglycerides. The chain is Acidic phospholipase A2 A' from Gloydius halys (Chinese water mocassin).